The following is a 1188-amino-acid chain: DNA-directed RNA polymerase subunit beta (1188 aa).

Belongs to the RNA polymerase beta chain family. As to quaternary structure, the RNAP catalytic core consists of 2 alpha, 1 beta, 1 beta' and 1 omega subunit. When a sigma factor is associated with the core the holoenzyme is formed, which can initiate transcription.

The catalysed reaction is RNA(n) + a ribonucleoside 5'-triphosphate = RNA(n+1) + diphosphate. Its function is as follows. DNA-dependent RNA polymerase catalyzes the transcription of DNA into RNA using the four ribonucleoside triphosphates as substrates. The sequence is that of DNA-directed RNA polymerase subunit beta from Streptococcus pyogenes serotype M1.